A 228-amino-acid polypeptide reads, in one-letter code: Phosphoglycolate phosphatase (228 aa).

Aspartate 9 serves as the catalytic Nucleophile. The Mg(2+) site is built by aspartate 9 and aspartate 11. Lysine 151 contacts substrate. Residues aspartate 174 and aspartate 178 each contribute to the Mg(2+) site.

The protein belongs to the archaeal SPP-like hydrolase family. Mg(2+) is required as a cofactor.

It catalyses the reaction 2-phosphoglycolate + H2O = glycolate + phosphate. Its function is as follows. Catalyzes the dephosphorylation of 2-phosphoglycolate. This chain is Phosphoglycolate phosphatase, found in Pyrobaculum islandicum (strain DSM 4184 / JCM 9189 / GEO3).